An 88-amino-acid polypeptide reads, in one-letter code: Exodeoxyribonuclease 7 small subunit (88 aa).

The protein belongs to the XseB family. As to quaternary structure, heterooligomer composed of large and small subunits.

Its subcellular location is the cytoplasm. The enzyme catalyses Exonucleolytic cleavage in either 5'- to 3'- or 3'- to 5'-direction to yield nucleoside 5'-phosphates.. Its function is as follows. Bidirectionally degrades single-stranded DNA into large acid-insoluble oligonucleotides, which are then degraded further into small acid-soluble oligonucleotides. The protein is Exodeoxyribonuclease 7 small subunit of Bordetella bronchiseptica (strain ATCC BAA-588 / NCTC 13252 / RB50) (Alcaligenes bronchisepticus).